The chain runs to 89 residues: Acylphosphatase (89 aa).

In terms of domain architecture, Acylphosphatase-like spans 3–89; it reads CKRWILYGRV…GNYGSFHIEY (87 aa). Active-site residues include arginine 18 and asparagine 36.

It belongs to the acylphosphatase family.

The enzyme catalyses an acyl phosphate + H2O = a carboxylate + phosphate + H(+). The chain is Acylphosphatase (acyP) from Petrotoga mobilis (strain DSM 10674 / SJ95).